We begin with the raw amino-acid sequence, 355 residues long: Protein RecA (355 aa).

67–74 (GPESSGKT) serves as a coordination point for ATP.

This sequence belongs to the RecA family.

The protein localises to the cytoplasm. In terms of biological role, can catalyze the hydrolysis of ATP in the presence of single-stranded DNA, the ATP-dependent uptake of single-stranded DNA by duplex DNA, and the ATP-dependent hybridization of homologous single-stranded DNAs. It interacts with LexA causing its activation and leading to its autocatalytic cleavage. This Shewanella halifaxensis (strain HAW-EB4) protein is Protein RecA.